The primary structure comprises 178 residues: Adenine phosphoribosyltransferase (178 aa).

This sequence belongs to the purine/pyrimidine phosphoribosyltransferase family. As to quaternary structure, homodimer.

It localises to the cytoplasm. It catalyses the reaction AMP + diphosphate = 5-phospho-alpha-D-ribose 1-diphosphate + adenine. Its pathway is purine metabolism; AMP biosynthesis via salvage pathway; AMP from adenine: step 1/1. Functionally, catalyzes a salvage reaction resulting in the formation of AMP, that is energically less costly than de novo synthesis. The sequence is that of Adenine phosphoribosyltransferase from Bacteroides fragilis (strain ATCC 25285 / DSM 2151 / CCUG 4856 / JCM 11019 / LMG 10263 / NCTC 9343 / Onslow / VPI 2553 / EN-2).